The sequence spans 71 residues: UPF0435 protein SE_1565 (71 aa).

It belongs to the UPF0435 family.

This Staphylococcus epidermidis (strain ATCC 12228 / FDA PCI 1200) protein is UPF0435 protein SE_1565.